Here is a 506-residue protein sequence, read N- to C-terminus: Cytochrome P450 52B1 (506 aa).

Cysteine 451 contacts heme.

The protein belongs to the cytochrome P450 family. It depends on heme as a cofactor.

In terms of biological role, together with an NADPH cytochrome P450 the enzyme system catalyzes the terminal hydroxylation as the first step in the assimilation of alkanes and fatty acids. This chain is Cytochrome P450 52B1 (CYP52B1), found in Candida tropicalis (Yeast).